We begin with the raw amino-acid sequence, 347 residues long: Phosphate acyltransferase (347 aa).

The protein belongs to the PlsX family. In terms of assembly, homodimer. Probably interacts with PlsY.

It is found in the cytoplasm. It carries out the reaction a fatty acyl-[ACP] + phosphate = an acyl phosphate + holo-[ACP]. It functions in the pathway lipid metabolism; phospholipid metabolism. In terms of biological role, catalyzes the reversible formation of acyl-phosphate (acyl-PO(4)) from acyl-[acyl-carrier-protein] (acyl-ACP). This enzyme utilizes acyl-ACP as fatty acyl donor, but not acyl-CoA. The chain is Phosphate acyltransferase from Dehalococcoides mccartyi (strain ATCC BAA-2100 / JCM 16839 / KCTC 5957 / BAV1).